A 79-amino-acid chain; its full sequence is Small serum protein 3 (79 aa).

The signal sequence occupies residues 1 to 19; that stretch reads MKVFFILIIFSFTLATCQG. Intrachain disulfides connect Cys-21–Cys-72, Cys-39–Cys-64, and Cys-62–Cys-71.

It localises to the secreted. Its function is as follows. Shows an slight inhibitory effect toward the metalloproteinase brevilysin H6, but does not inhibit the metalloproteinases thermolysin, HR1A and HR1B. The protein is Small serum protein 3 of Protobothrops flavoviridis (Habu).